Consider the following 156-residue polypeptide: Small ribosomal subunit protein uS7 (156 aa).

It belongs to the universal ribosomal protein uS7 family. As to quaternary structure, part of the 30S ribosomal subunit. Contacts proteins S9 and S11.

Functionally, one of the primary rRNA binding proteins, it binds directly to 16S rRNA where it nucleates assembly of the head domain of the 30S subunit. Is located at the subunit interface close to the decoding center, probably blocks exit of the E-site tRNA. The protein is Small ribosomal subunit protein uS7 of Lactobacillus helveticus (strain DPC 4571).